A 165-amino-acid polypeptide reads, in one-letter code: Large ribosomal subunit protein mL49 (165 aa).

Residues Thr42–Thr75 show a composition bias toward low complexity. Residues Thr42–Val81 form a disordered region.

The protein belongs to the mitochondrion-specific ribosomal protein mL49 family. As to quaternary structure, component of the mitochondrial large ribosomal subunit (mt-LSU). Mature N.crassa 74S mitochondrial ribosomes consist of a small (37S) and a large (54S) subunit. The 37S small subunit contains a 16S ribosomal RNA (16S mt-rRNA) and 32 different proteins. The 54S large subunit contains a 23S rRNA (23S mt-rRNA) and 42 different proteins.

Its subcellular location is the mitochondrion. In terms of biological role, component of the mitochondrial ribosome (mitoribosome), a dedicated translation machinery responsible for the synthesis of mitochondrial genome-encoded proteins, including at least some of the essential transmembrane subunits of the mitochondrial respiratory chain. The mitoribosomes are attached to the mitochondrial inner membrane and translation products are cotranslationally integrated into the membrane. The polypeptide is Large ribosomal subunit protein mL49 (img2) (Neurospora crassa (strain ATCC 24698 / 74-OR23-1A / CBS 708.71 / DSM 1257 / FGSC 987)).